A 780-amino-acid chain; its full sequence is Ral guanine nucleotide dissociation stimulator-like 2 (780 aa).

The interval 1 to 92 (MLPRPLRLLW…PTPPPRSSRR (92 aa)) is disordered. Phosphoserine is present on serine 13. Residues 31-42 (GGGPGGRGVGGG) are compositionally biased toward gly residues. The span at 43–65 (QEEEEEEEEDEAPVSVWDEEEDG) shows a compositional bias: acidic residues. The N-terminal Ras-GEF domain maps to 89–213 (SSRRLRAGTL…GSADLIRNLR (125 aa)). The Ras-GEF domain maps to 244–516 (LADHLAEQLT…HRVSCEVEPP (273 aa)). Residues 596–613 (HSLADPSHLSPPASSPRP) are compositionally biased toward low complexity. Disordered stretches follow at residues 596–651 (HSLA…GASD) and 741–769 (TATL…PRIK). The region spanning 651–738 (DCRIIRVQME…HDFLLRQRRR (88 aa)) is the Ras-associating domain. Residues 741–758 (TATLGLTSSPSASGTPPS) show a composition bias toward low complexity.

Interacts with SAMD9.

In terms of biological role, probable guanine nucleotide exchange factor. Putative effector of Ras and/or Rap. Associates with the GTP-bound form of Rap 1A and H-Ras in vitro. The protein is Ral guanine nucleotide dissociation stimulator-like 2 (RGL2) of Canis lupus familiaris (Dog).